A 118-amino-acid polypeptide reads, in one-letter code: SPbeta prophage-derived uncharacterized protein YolB (118 aa).

This Bacillus subtilis (strain 168) protein is SPbeta prophage-derived uncharacterized protein YolB (yolB).